The following is a 511-amino-acid chain: Putative thymidine phosphorylase (511 aa).

The protein belongs to the thymidine/pyrimidine-nucleoside phosphorylase family. Type 2 subfamily.

It carries out the reaction thymidine + phosphate = 2-deoxy-alpha-D-ribose 1-phosphate + thymine. This Polaromonas sp. (strain JS666 / ATCC BAA-500) protein is Putative thymidine phosphorylase.